Here is a 740-residue protein sequence, read N- to C-terminus: Phosphoribosylformylglycinamidine synthase subunit PurL (740 aa).

The active site involves histidine 55. ATP is bound by residues tyrosine 58 and lysine 97. Glutamate 99 lines the Mg(2+) pocket. Residues serine 100–histidine 103 and arginine 122 each bind substrate. Histidine 101 (proton acceptor) is an active-site residue. Aspartate 123 is a Mg(2+) binding site. Substrate is bound at residue glutamine 246. Mg(2+) is bound at residue aspartate 276. Glutamate 320–glutamine 322 contacts substrate. The ATP site is built by aspartate 501 and glycine 538. Residue asparagine 539 participates in Mg(2+) binding. Serine 541 contributes to the substrate binding site.

This sequence belongs to the FGAMS family. In terms of assembly, monomer. Part of the FGAM synthase complex composed of 1 PurL, 1 PurQ and 2 PurS subunits.

Its subcellular location is the cytoplasm. It catalyses the reaction N(2)-formyl-N(1)-(5-phospho-beta-D-ribosyl)glycinamide + L-glutamine + ATP + H2O = 2-formamido-N(1)-(5-O-phospho-beta-D-ribosyl)acetamidine + L-glutamate + ADP + phosphate + H(+). It functions in the pathway purine metabolism; IMP biosynthesis via de novo pathway; 5-amino-1-(5-phospho-D-ribosyl)imidazole from N(2)-formyl-N(1)-(5-phospho-D-ribosyl)glycinamide: step 1/2. In terms of biological role, part of the phosphoribosylformylglycinamidine synthase complex involved in the purines biosynthetic pathway. Catalyzes the ATP-dependent conversion of formylglycinamide ribonucleotide (FGAR) and glutamine to yield formylglycinamidine ribonucleotide (FGAM) and glutamate. The FGAM synthase complex is composed of three subunits. PurQ produces an ammonia molecule by converting glutamine to glutamate. PurL transfers the ammonia molecule to FGAR to form FGAM in an ATP-dependent manner. PurS interacts with PurQ and PurL and is thought to assist in the transfer of the ammonia molecule from PurQ to PurL. This Lacticaseibacillus casei (Lactobacillus casei) protein is Phosphoribosylformylglycinamidine synthase subunit PurL.